A 303-amino-acid chain; its full sequence is Hemolysin E (303 aa).

C87 and C285 are oxidised to a cystine. Residues 179–199 (AGAAAGIVAGPFGLIISYSIA) traverse the membrane as a helical segment.

This sequence belongs to the hemolysin E family. In terms of assembly, monomer and oligomer. In periplasm, it is present as a monomer, while in outer membrane vesicles, it oligomerizes to form a pore structure that is active. The pore is formed by a dodecamer. Post-translationally, in periplasm, it forms a disulfide bond, which prevents the oligomerization. In outer membrane vesicles, the redox status prevents formation of the disulfide bond, leading to oligomerization and pore formation.

It is found in the secreted. It localises to the periplasm. The protein resides in the host cell membrane. Functionally, toxin, which has some hemolytic activity towards mammalian cells. Acts by forming a pore-like structure upon contact with mammalian cells. This is Hemolysin E (hlyE) from Salmonella paratyphi A (strain ATCC 9150 / SARB42).